The sequence spans 423 residues: 4-hydroxy-3-methylbut-2-en-1-yl diphosphate synthase (flavodoxin) (423 aa).

Positions 307, 310, 353, and 360 each coordinate [4Fe-4S] cluster.

Belongs to the IspG family. It depends on [4Fe-4S] cluster as a cofactor.

It catalyses the reaction (2E)-4-hydroxy-3-methylbut-2-enyl diphosphate + oxidized [flavodoxin] + H2O + 2 H(+) = 2-C-methyl-D-erythritol 2,4-cyclic diphosphate + reduced [flavodoxin]. It functions in the pathway isoprenoid biosynthesis; isopentenyl diphosphate biosynthesis via DXP pathway; isopentenyl diphosphate from 1-deoxy-D-xylulose 5-phosphate: step 5/6. Converts 2C-methyl-D-erythritol 2,4-cyclodiphosphate (ME-2,4cPP) into 1-hydroxy-2-methyl-2-(E)-butenyl 4-diphosphate. This chain is 4-hydroxy-3-methylbut-2-en-1-yl diphosphate synthase (flavodoxin), found in Brucella anthropi (strain ATCC 49188 / DSM 6882 / CCUG 24695 / JCM 21032 / LMG 3331 / NBRC 15819 / NCTC 12168 / Alc 37) (Ochrobactrum anthropi).